The primary structure comprises 139 residues: Small ribosomal subunit protein uS9 (139 aa).

This sequence belongs to the universal ribosomal protein uS9 family.

This is Small ribosomal subunit protein uS9 from Coxiella burnetii (strain CbuG_Q212) (Coxiella burnetii (strain Q212)).